A 150-amino-acid chain; its full sequence is Peptide methionine sulfoxide reductase MsrB (150 aa).

Residues 9 to 132 (EAELKRTLTK…NSAALKFIPF (124 aa)) enclose the MsrB domain. Cys-121 acts as the Nucleophile in catalysis.

The protein belongs to the MsrB Met sulfoxide reductase family.

The catalysed reaction is L-methionyl-[protein] + [thioredoxin]-disulfide + H2O = L-methionyl-(R)-S-oxide-[protein] + [thioredoxin]-dithiol. In Mycoplasma genitalium (strain ATCC 33530 / DSM 19775 / NCTC 10195 / G37) (Mycoplasmoides genitalium), this protein is Peptide methionine sulfoxide reductase MsrB.